Here is a 699-residue protein sequence, read N- to C-terminus: Elongation factor G 1 (699 aa).

In terms of domain architecture, tr-type G spans 8-290; sequence ERYRNIGICA…AVIEYLPSPI (283 aa). GTP contacts are provided by residues 17 to 24, 88 to 92, and 142 to 145; these read AHVDAGKT, DTPGH, and NKMD.

This sequence belongs to the TRAFAC class translation factor GTPase superfamily. Classic translation factor GTPase family. EF-G/EF-2 subfamily.

The protein resides in the cytoplasm. Functionally, catalyzes the GTP-dependent ribosomal translocation step during translation elongation. During this step, the ribosome changes from the pre-translocational (PRE) to the post-translocational (POST) state as the newly formed A-site-bound peptidyl-tRNA and P-site-bound deacylated tRNA move to the P and E sites, respectively. Catalyzes the coordinated movement of the two tRNA molecules, the mRNA and conformational changes in the ribosome. This chain is Elongation factor G 1, found in Vibrio vulnificus (strain YJ016).